Consider the following 540-residue polypeptide: Gamma-cadinene synthase (540 aa).

Residues Asp-292, Asp-296, Asp-436, Ser-440, and Glu-444 each contribute to the Mg(2+) site. The DDXXD motif motif lies at 292 to 296; that stretch reads DDTYD.

It belongs to the terpene synthase family. Mg(2+) serves as cofactor. Requires Mn(2+) as cofactor.

It catalyses the reaction (2E,6E)-farnesyl diphosphate = (+)-gamma-cadinene + diphosphate. It participates in secondary metabolite biosynthesis; terpenoid biosynthesis. Functionally, sesquiterpene synthase that catalyzes the cyclization of trans,trans-farnesyl diphosphate (FPP) to gamma cadinene. In Ocimum basilicum (Sweet basil), this protein is Gamma-cadinene synthase (CDS).